A 99-amino-acid chain; its full sequence is Secreted RxLR effector protein 94 (99 aa).

The RxLR-dEER motif lies at Arg-35–Arg-55.

It belongs to the RxLR effector family.

It localises to the secreted. The protein localises to the host nucleus. It is found in the host cytoplasm. Its function is as follows. Secreted effector that completely suppresses the host cell death induced by cell death-inducing proteins. The polypeptide is Secreted RxLR effector protein 94 (Plasmopara viticola (Downy mildew of grapevine)).